The primary structure comprises 625 residues: Cysteine-rich receptor-like protein kinase 46 (625 aa).

The first 23 residues, 1-23 (MASTLISSLAVVLPLTLLAPSMS), serve as a signal peptide directing secretion. Residues 24–252 (MKISRIDVLG…LLAMSFTKEN (229 aa)) are Extracellular-facing. 2 consecutive Gnk2-homologous domains span residues 29–130 (IDVL…NYSF) and 135–237 (VSHQ…NYTF). N-linked (GlcNAc...) asparagine glycosylation is found at Asn38, Asn127, Asn234, and Asn252. Residues 253–273 (LTYIFVISMVGVLAIAAGFWC) traverse the membrane as a helical segment. Over 274–625 (GKCFYMRTSP…TKPPFLHDSM (352 aa)) the chain is Cytoplasmic. Residues 331 to 621 (FNESCKLGVG…LPTPTKPPFL (291 aa)) form the Protein kinase domain. ATP is bound by residues 337 to 345 (LGVGGYGEV) and Lys359. Tyr404 bears the Phosphotyrosine mark. The active-site Proton acceptor is the Asp454. Ser458 carries the post-translational modification Phosphoserine. Thr499 is subject to Phosphothreonine. At Tyr507 the chain carries Phosphotyrosine.

It belongs to the protein kinase superfamily. Ser/Thr protein kinase family. CRK subfamily.

It localises to the membrane. The catalysed reaction is L-seryl-[protein] + ATP = O-phospho-L-seryl-[protein] + ADP + H(+). It carries out the reaction L-threonyl-[protein] + ATP = O-phospho-L-threonyl-[protein] + ADP + H(+). The protein is Cysteine-rich receptor-like protein kinase 46 of Arabidopsis thaliana (Mouse-ear cress).